A 396-amino-acid polypeptide reads, in one-letter code: Elongation factor Tu (396 aa).

The 197-residue stretch at 10-206 (KPHCNIGTIG…NVDEYIPQPE (197 aa)) folds into the tr-type G domain. A G1 region spans residues 19 to 26 (GHVDHGKT). 19-26 (GHVDHGKT) provides a ligand contact to GTP. Threonine 26 serves as a coordination point for Mg(2+). Residues 60 to 64 (GITIS) are G2. A G3 region spans residues 81–84 (DCPG). Residues 81 to 85 (DCPGH) and 136 to 139 (NKCD) contribute to the GTP site. The segment at 136–139 (NKCD) is G4. Residues 174-176 (SAL) are G5.

The protein belongs to the TRAFAC class translation factor GTPase superfamily. Classic translation factor GTPase family. EF-Tu/EF-1A subfamily. In terms of assembly, monomer.

The protein localises to the cytoplasm. The enzyme catalyses GTP + H2O = GDP + phosphate + H(+). Functionally, GTP hydrolase that promotes the GTP-dependent binding of aminoacyl-tRNA to the A-site of ribosomes during protein biosynthesis. This is Elongation factor Tu from Bradyrhizobium diazoefficiens (strain JCM 10833 / BCRC 13528 / IAM 13628 / NBRC 14792 / USDA 110).